The chain runs to 341 residues: tRNA N6-adenosine threonylcarbamoyltransferase (341 aa).

2 residues coordinate Fe cation: H115 and H119. Residues 137 to 141 (IVSGG), D170, G183, D187, and N276 contribute to the substrate site. Residue D304 coordinates Fe cation.

It belongs to the KAE1 / TsaD family. Fe(2+) serves as cofactor.

The protein resides in the cytoplasm. It carries out the reaction L-threonylcarbamoyladenylate + adenosine(37) in tRNA = N(6)-L-threonylcarbamoyladenosine(37) in tRNA + AMP + H(+). In terms of biological role, required for the formation of a threonylcarbamoyl group on adenosine at position 37 (t(6)A37) in tRNAs that read codons beginning with adenine. Is involved in the transfer of the threonylcarbamoyl moiety of threonylcarbamoyl-AMP (TC-AMP) to the N6 group of A37, together with TsaE and TsaB. TsaD likely plays a direct catalytic role in this reaction. This is tRNA N6-adenosine threonylcarbamoyltransferase from Staphylococcus aureus (strain bovine RF122 / ET3-1).